The primary structure comprises 568 residues: Periplasmic pectate lyase (568 aa).

The first 19 residues, 1-19 (MKRFALSLLAGLVALQASA), serve as a signal peptide directing secretion.

It belongs to the polysaccharide lyase 2 family.

It is found in the periplasm. The enzyme catalyses Eliminative cleavage of (1-&gt;4)-alpha-D-galacturonan to give oligosaccharides with 4-deoxy-alpha-D-galact-4-enuronosyl groups at their non-reducing ends.. It functions in the pathway glycan metabolism; pectin degradation; 2-dehydro-3-deoxy-D-gluconate from pectin: step 2/5. The chain is Periplasmic pectate lyase (pelB) from Pectobacterium carotovorum subsp. carotovorum (Erwinia carotovora subsp. carotovora).